The chain runs to 102 residues: RNA-binding protein Hfq (102 aa).

The Sm domain maps to 9–68; sequence DPFLNALRRERVPVSIYLVNGIKLQGQIESFDQFVILLKNTVSQMVYKHAISTVVPSRPV. The disordered stretch occupies residues 63 to 102; it reads VPSRPVSHHSNNTGGGSNNYHHGSSPAPSSQPQQDSADAE. Over residues 70–102 the composition is skewed to low complexity; the sequence is HHSNNTGGGSNNYHHGSSPAPSSQPQQDSADAE.

This sequence belongs to the Hfq family. In terms of assembly, homohexamer.

RNA chaperone that binds small regulatory RNA (sRNAs) and mRNAs to facilitate mRNA translational regulation in response to envelope stress, environmental stress and changes in metabolite concentrations. Also binds with high specificity to tRNAs. This chain is RNA-binding protein Hfq, found in Erwinia tasmaniensis (strain DSM 17950 / CFBP 7177 / CIP 109463 / NCPPB 4357 / Et1/99).